The primary structure comprises 122 residues: Large ribosomal subunit protein uL14 (122 aa).

The protein belongs to the universal ribosomal protein uL14 family. In terms of assembly, part of the 50S ribosomal subunit. Forms a cluster with proteins L3 and L19. In the 70S ribosome, L14 and L19 interact and together make contacts with the 16S rRNA in bridges B5 and B8.

Its function is as follows. Binds to 23S rRNA. Forms part of two intersubunit bridges in the 70S ribosome. The chain is Large ribosomal subunit protein uL14 from Afipia carboxidovorans (strain ATCC 49405 / DSM 1227 / KCTC 32145 / OM5) (Oligotropha carboxidovorans).